The following is a 391-amino-acid chain: 1-deoxy-D-xylulose 5-phosphate reductoisomerase (391 aa).

Thr-10, Gly-11, Ser-12, Ile-13, Asn-38, and Asn-122 together coordinate NADPH. Lys-123 is a 1-deoxy-D-xylulose 5-phosphate binding site. Position 124 (Glu-124) interacts with NADPH. Mn(2+) is bound at residue Asp-148. Residues Ser-149, Glu-150, Ser-173, and His-196 each coordinate 1-deoxy-D-xylulose 5-phosphate. Glu-150 is a Mn(2+) binding site. Gly-202 lines the NADPH pocket. The 1-deoxy-D-xylulose 5-phosphate site is built by Ser-209, Asn-214, Lys-215, and Glu-218. Glu-218 contributes to the Mn(2+) binding site.

The protein belongs to the DXR family. Mg(2+) is required as a cofactor. Mn(2+) serves as cofactor.

The catalysed reaction is 2-C-methyl-D-erythritol 4-phosphate + NADP(+) = 1-deoxy-D-xylulose 5-phosphate + NADPH + H(+). Its pathway is isoprenoid biosynthesis; isopentenyl diphosphate biosynthesis via DXP pathway; isopentenyl diphosphate from 1-deoxy-D-xylulose 5-phosphate: step 1/6. Catalyzes the NADPH-dependent rearrangement and reduction of 1-deoxy-D-xylulose-5-phosphate (DXP) to 2-C-methyl-D-erythritol 4-phosphate (MEP). This chain is 1-deoxy-D-xylulose 5-phosphate reductoisomerase, found in Wolbachia pipientis subsp. Culex pipiens (strain wPip).